The primary structure comprises 449 residues: Probable aminotransferase TAT1 (449 aa).

A compositionally biased stretch (polar residues) spans 1 to 12 (MNHNSNLVLPSH). A disordered region spans residues 1–20 (MNHNSNLVLPSHQTETQTQD).

It belongs to the class-I pyridoxal-phosphate-dependent aminotransferase family. It depends on pyridoxal 5'-phosphate as a cofactor.

The sequence is that of Probable aminotransferase TAT1 from Arabidopsis thaliana (Mouse-ear cress).